Consider the following 142-residue polypeptide: Nucleoside diphosphate kinase (142 aa).

Residues Lys-11, Phe-59, Arg-87, Thr-93, Arg-104, and Asn-114 each contribute to the ATP site. His-117 acts as the Pros-phosphohistidine intermediate in catalysis.

It belongs to the NDK family. As to quaternary structure, homotetramer. Mg(2+) serves as cofactor.

It is found in the cytoplasm. It catalyses the reaction a 2'-deoxyribonucleoside 5'-diphosphate + ATP = a 2'-deoxyribonucleoside 5'-triphosphate + ADP. The catalysed reaction is a ribonucleoside 5'-diphosphate + ATP = a ribonucleoside 5'-triphosphate + ADP. Its function is as follows. Major role in the synthesis of nucleoside triphosphates other than ATP. The ATP gamma phosphate is transferred to the NDP beta phosphate via a ping-pong mechanism, using a phosphorylated active-site intermediate. This chain is Nucleoside diphosphate kinase, found in Wigglesworthia glossinidia brevipalpis.